The following is a 232-amino-acid chain: 5'-methylthioadenosine/S-adenosylhomocysteine nucleosidase (232 aa).

Catalysis depends on Glu12, which acts as the Proton acceptor. Residues Gly78, Val152, and 173–174 each bind substrate; that span reads ME. Residue Asp197 is the Proton donor of the active site.

It belongs to the PNP/UDP phosphorylase family. MtnN subfamily. As to quaternary structure, homodimer.

The enzyme catalyses S-adenosyl-L-homocysteine + H2O = S-(5-deoxy-D-ribos-5-yl)-L-homocysteine + adenine. The catalysed reaction is S-methyl-5'-thioadenosine + H2O = 5-(methylsulfanyl)-D-ribose + adenine. It carries out the reaction 5'-deoxyadenosine + H2O = 5-deoxy-D-ribose + adenine. The protein operates within amino-acid biosynthesis; L-methionine biosynthesis via salvage pathway; S-methyl-5-thio-alpha-D-ribose 1-phosphate from S-methyl-5'-thioadenosine (hydrolase route): step 1/2. In terms of biological role, catalyzes the irreversible cleavage of the glycosidic bond in both 5'-methylthioadenosine (MTA) and S-adenosylhomocysteine (SAH/AdoHcy) to adenine and the corresponding thioribose, 5'-methylthioribose and S-ribosylhomocysteine, respectively. Also cleaves 5'-deoxyadenosine, a toxic by-product of radical S-adenosylmethionine (SAM) enzymes, into 5-deoxyribose and adenine. Thus, is required for in vivo function of the radical SAM enzymes biotin synthase and lipoic acid synthase, that are inhibited by 5'-deoxyadenosine accumulation. The polypeptide is 5'-methylthioadenosine/S-adenosylhomocysteine nucleosidase (Buchnera aphidicola subsp. Acyrthosiphon pisum (strain 5A)).